A 361-amino-acid polypeptide reads, in one-letter code: MPRLGRFAINAKNYFLTYPRCPLTKEDVLEQLLALSTPVNKKFIRVCRELHEDGEPHLHVLLQFEGKLQTKNERFFDLVSPTRSTHYHPNIQAAKSASDVKSYMDKDGDVLDHGSFQVDGRSARGGKQSANDAYAEALNSGSKLQALNILREKAPKDYILQFHNLNCNLSRIFADDVPPYVSPYSLSAFDKVPSYISSWASENVRDSCAPERPISIVIEGDSRTGKTMWARALGPHNYLCGHLDLNSKIYSNDAWYNVIDDVDPHYLKHFKEFMGAQRDWQSNVKYGKPTHIKGGIPTIFLCNPGPKSSYKEYLDEPDNTALKLWASKNAEFYTLKEPLFSSVDQGATQGCQEASNSTLSN.

The 109-residue stretch at 8 to 116 (AINAKNYFLT…DGDVLDHGSF (109 aa)) folds into the CRESS-DNA virus Rep endonuclease domain. Residues 15–18 (FLTY) carry the RCR-1 motif. The a divalent metal cation site is built by E49, H57, and H59. The RCR-2 motif lies at 57-59 (HLH). Y103 acts as the For DNA cleavage activity in catalysis. Positions 103-106 (YMDK) match the RCR-3 motif. Residue D107 participates in a divalent metal cation binding. Positions 143-153 (KLQALNILREK) are binding to RBR1. The interval 156–176 (KDYILQFHNLNCNLSRIFADD) is oligomerization. 220 to 227 (GDSRTGKT) is an ATP binding site.

It belongs to the geminiviridae Rep protein family. Homooligomer. Interacts with the replication enhancer protein (REn). Interacts with host retinoblastoma-related protein 1 (RBR1), and may thereby induce the transcription of host replicative enzymes even if the cell is not dividing anymore. Interacts with host PCNA. Interacts with host SCE1 protein. Binds to host RAD54 protein to ensure geminiviral replication. Requires Mg(2+) as cofactor. The cofactor is Mn(2+).

The protein resides in the host nucleus. Essential for the replication of viral ssDNA. The closed circular ssDNA genome is first converted to a superhelical dsDNA. Rep binds a specific region at the genome origin of replication. It introduces an endonucleolytic nick within the conserved sequence 5'-TAATATTAC-3' in the intergenic region of the genome present in all geminiviruses, thereby initiating the rolling circle replication (RCR). Following cleavage, binds covalently to the 5'-phosphate of DNA as a tyrosyl ester. The cleavage gives rise to a free 3'-OH that serves as a primer for the cellular DNA polymerase. The polymerase synthesizes the (+) strand DNA by rolling circle mechanism. After one round of replication, a Rep-catalyzed nucleotidyl transfer reaction releases a circular single-stranded virus genome, thereby terminating the replication. Displays origin-specific DNA cleavage, nucleotidyl transferase, ATPase and helicase activities. The sequence is that of Replication-associated protein from Mungbean yellow mosaic virus (strain Vigna) (MYMV).